Here is a 330-residue protein sequence, read N- to C-terminus: 6-methylsalicylic acid decarboxylase acuB (330 aa).

Residues histidine 6, histidine 8, histidine 156, and aspartate 276 each coordinate Zn(2+).

It belongs to the metallo-dependent hydrolases superfamily. ACMSD family. Monomer.

The protein localises to the cytoplasm. It is found in the cytosol. It catalyses the reaction 6-methylsalicylate + H(+) = 3-methylphenol + CO2. The protein operates within secondary metabolite biosynthesis. 6-methylsalicylic acid decarboxylase; part of the gene cluster that mediates the biosynthesis of aculins. The pathway begins with the synthesis of 6-methylsalicylic acid by the polyketide synthase (PKS) acuA via condensation of acetate and malonate units. The 6-methylsalicylic acid decarboxylase acuB then catalyzes the decarboxylation of 6-methylsalicylic acid to yield m-cresol (also known as 3-methylphenol). These first reactions occur in the cytosol. The intermediate m-cresol is then transported into the endoplasmic reticulum where the cytochrome P450 monooxygenase acuC converts it to m-hydroxybenzyl alcohol, which is further converted to gentisyl alcohol by the cytochrome P450 monooxygenase acuD. Gentisyl alcohol is further oxidized by the oxidoreductase acuE that probably catalyzes hydroxylation of the aromatic ring. The aromatic system might then be opened by oxidation through a Baeyer-Villiger type of oxidation, which could be catalyzed by acuF, with the carboxylic acid at C-1 subsequently reduced to an aldehyde by acuG. Subsequently, a hemiacetal is formed, before the dehydrogenase acuH would reduce the double bond between C-4 and C-6. Finally, keto-enol tautomerism results in formation of aculinic acid, which exists as two diastereomers (both R/S configurations at C-1) by non-enzymatic hemiacetal formation. The carboxypeptidase acuI could be involved in the linking of aculinic acid to an aculene A moiety produced by the aculene biosynthesis cluster and which leads to the production of aculin A. AcuI may also be involved in the attachment of proline to aculinic acid to form epi-aculins A and B. This is 6-methylsalicylic acid decarboxylase acuB from Aspergillus aculeatus (strain ATCC 16872 / CBS 172.66 / WB 5094).